Here is a 105-residue protein sequence, read N- to C-terminus: Small cysteine and glycine repeat-containing protein 6 (105 aa).

The tract at residues 4-83 (CGCGGCGGGC…HSCGCGCGCG (80 aa)) is 13 X 2 AA repeats of CG.

This sequence belongs to the KRTAP type 28 family.

Its function is as follows. In the hair cortex, hair keratin intermediate filaments are embedded in an interfilamentous matrix, consisting of hair keratin-associated proteins (KRTAP), which are essential for the formation of a rigid and resistant hair shaft through their extensive disulfide bond cross-linking with abundant cysteine residues of hair keratins. The matrix proteins include the high-sulfur and high-glycine-tyrosine keratins. The chain is Small cysteine and glycine repeat-containing protein 6 from Homo sapiens (Human).